Reading from the N-terminus, the 71-residue chain is Ceratotoxin-A (71 aa).

Positions Met-1–Ala-23 are cleaved as a signal peptide. 2 consecutive propeptides follow at residues Glu-24–Arg-35 and Val-65–Gly-71.

Homomer of four to six subunits.

It is found in the secreted. Female-specific peptides with potent activity against Gram-positive and Gram-negative bacteria. They have as well hemolytic activity. This chain is Ceratotoxin-A (CTXA2), found in Ceratitis capitata (Mediterranean fruit fly).